Reading from the N-terminus, the 262-residue chain is 3-methyl-2-oxobutanoate hydroxymethyltransferase (262 aa).

Residues Asp-44 and Asp-83 each coordinate Mg(2+). 3-methyl-2-oxobutanoate is bound by residues 44–45 (DS), Asp-83, and Lys-112. Glu-114 provides a ligand contact to Mg(2+). The active-site Proton acceptor is Glu-177.

This sequence belongs to the PanB family. Homodecamer; pentamer of dimers. Requires Mg(2+) as cofactor.

The protein resides in the cytoplasm. The catalysed reaction is 3-methyl-2-oxobutanoate + (6R)-5,10-methylene-5,6,7,8-tetrahydrofolate + H2O = 2-dehydropantoate + (6S)-5,6,7,8-tetrahydrofolate. It functions in the pathway cofactor biosynthesis; coenzyme A biosynthesis. Functionally, catalyzes the reversible reaction in which hydroxymethyl group from 5,10-methylenetetrahydrofolate is transferred onto alpha-ketoisovalerate to form ketopantoate. This chain is 3-methyl-2-oxobutanoate hydroxymethyltransferase, found in Metallosphaera sedula (strain ATCC 51363 / DSM 5348 / JCM 9185 / NBRC 15509 / TH2).